A 454-amino-acid chain; its full sequence is uncharacterized protein (454 aa).

In terms of domain architecture, HNH spans 364 to 405 (CSRPGCDAPAYHSEVHHVTPWTTTHRTDINDLTLACGPDNRL).

This sequence belongs to the Rv1128c/1148c/1588c/1702c/1945/3466 family.

This is an uncharacterized protein from Mycobacterium tuberculosis (strain ATCC 25618 / H37Rv).